A 129-amino-acid polypeptide reads, in one-letter code: Succinate dehydrogenase assembly factor 3, mitochondrial (129 aa).

This sequence belongs to the complex I LYR family. SDHAF3 subfamily. Interacts with the iron-sulfur protein subunit within the SDH catalytic dimer.

The protein resides in the mitochondrion matrix. Plays an essential role in the assembly of succinate dehydrogenase (SDH), an enzyme complex (also referred to as respiratory complex II) that is a component of both the tricarboxylic acid (TCA) cycle and the mitochondrial electron transport chain, and which couples the oxidation of succinate to fumarate with the reduction of ubiquinone (coenzyme Q) to ubiquinol. Promotes maturation of the iron-sulfur protein subunit of the SDH catalytic dimer, protecting it from the deleterious effects of oxidants. May act together with SDHAF1. This Aspergillus fumigatus (strain ATCC MYA-4609 / CBS 101355 / FGSC A1100 / Af293) (Neosartorya fumigata) protein is Succinate dehydrogenase assembly factor 3, mitochondrial.